A 37-amino-acid polypeptide reads, in one-letter code: Kappa-actitoxin-Bgr1a (37 aa).

In terms of domain architecture, ShKT spans 2–37 (CRDWFKETACRHAKSLGNCRTSQKYRANCAKTCELC). 3 disulfide bridges follow: Cys2–Cys37, Cys11–Cys30, and Cys20–Cys34. The tract at residues 25–26 (KY) is crucial for binding to potassium channels.

It belongs to the sea anemone type 1 potassium channel toxin family. Type 1b subfamily.

It localises to the secreted. Its subcellular location is the nematocyst. In terms of biological role, inhibits voltage-dependent potassium channels of the Kv1 family (Kv1.1/KCNA1 (Kd=6 nM), Kv1.2/KCNA2 (Kd=15 nM), Kv1.3/KCNA3 (Kd=10-39 nM), Kv1.6/KCNA6, and KCa3.1/KCNN4 (Kd=172 nM)). This Bunodosoma granuliferum (Red warty sea anemone) protein is Kappa-actitoxin-Bgr1a.